The chain runs to 544 residues: Lysophosphatidylcholine acyltransferase 2 (544 aa).

At 1–57 (MSRCAQAAEVAATVPGAGVGNVGLRPPMVPRQASFFPPPVPNPFVQQTQIGSARRVQ) the chain is on the cytoplasmic side. A helical; Signal-anchor for type II membrane protein transmembrane segment spans residues 58–78 (IVLLGIILLPIRVLLVALILL). Residues 79-544 (LAWPFAAIST…EESTSDKKDD (466 aa)) are Lumenal-facing. An HXXXXD motif motif is present at residues 146–151 (HSTFFD). The EGTC motif motif lies at 220–223 (EGTC). 2 consecutive EF-hand domains span residues 391-426 (PVSD…LCNP) and 428-463 (NTEE…SLGV). Ca(2+) contacts are provided by Asp-404, Asn-406, Asp-408, Ser-410, Glu-415, Asp-441, Asp-443, Asp-445, Tyr-447, and Glu-452. The span at 518 to 529 (VQTTPSTASNKV) shows a compositional bias: polar residues. The tract at residues 518 to 544 (VQTTPSTASNKVSPEKHEESTSDKKDD) is disordered. Positions 530 to 544 (SPEKHEESTSDKKDD) are enriched in basic and acidic residues.

This sequence belongs to the 1-acyl-sn-glycerol-3-phosphate acyltransferase family.

It is found in the endoplasmic reticulum membrane. The protein localises to the golgi apparatus membrane. Its subcellular location is the cell membrane. The protein resides in the lipid droplet. It catalyses the reaction a 1-acyl-sn-glycero-3-phosphocholine + an acyl-CoA = a 1,2-diacyl-sn-glycero-3-phosphocholine + CoA. The enzyme catalyses a 1-O-alkyl-sn-glycero-3-phosphocholine + acetyl-CoA = a 1-O-alkyl-2-acetyl-sn-glycero-3-phosphocholine + CoA. It carries out the reaction a 1-acyl-sn-glycero-3-phosphate + an acyl-CoA = a 1,2-diacyl-sn-glycero-3-phosphate + CoA. The catalysed reaction is a 1-O-(1Z-alkenyl)-sn-glycero-3-phosphocholine + an acyl-CoA = a 1-O-(1Z-alkenyl)-2-acyl-sn-glycero-3-phosphocholine + CoA. It catalyses the reaction 1-hexadecanoyl-sn-glycero-3-phosphate + (9Z)-octadecenoyl-CoA = 1-hexadecanoyl-2-(9Z-octadecenoyl)-sn-glycero-3-phosphate + CoA. The enzyme catalyses 1-(9Z-octadecenoyl)-sn-glycero-3-phosphate + (9Z)-octadecenoyl-CoA = 1,2-di-(9Z-octadecenoyl)-sn-glycero-3-phosphate + CoA. It carries out the reaction 1-(9Z-octadecenoyl)-sn-glycero-3-phosphate + hexadecanoyl-CoA = 1-(9Z)-octadecenoyl-2-hexadecanoyl-sn-glycero-3-phosphate + CoA. The catalysed reaction is 1-heptadecanoyl-sn-glycero-3-phosphate + (9Z)-octadecenoyl-CoA = 1-heptadecanoyl-2-(9Z)-octadecenoyl-sn-glycero-3-phosphate + CoA. It catalyses the reaction 1-octadecanoyl-sn-glycero-3-phosphate + (9Z)-octadecenoyl-CoA = 1-octadecanoyl-2-(9Z-octadecenoyl)-sn-glycero-3-phosphate + CoA. The enzyme catalyses heptadecanoyl-CoA + 1-(9Z-octadecenoyl)-sn-glycero-3-phosphate = 1-(9Z)-octadecenoyl-2-heptadecanoyl-sn-glycero-3-phosphate + CoA. It carries out the reaction 1-(9Z-octadecenoyl)-sn-glycero-3-phosphate + (9Z,12Z)-octadecadienoyl-CoA = 1-(9Z)-octadecenoyl-2-(9Z,12Z)-octadecadienoyl-sn-glycero-3-phosphate + CoA. The catalysed reaction is 1-(9Z-octadecenoyl)-sn-glycero-3-phosphate + tetradecanoyl-CoA = 1-(9Z)-octadecenoyl-2-tetradecanoyl-sn-glycero-3-phosphate + CoA. It catalyses the reaction pentadecanoyl-CoA + 1-(9Z-octadecenoyl)-sn-glycero-3-phosphate = 1-(9Z)-octadecenoyl-2-pentadecanoyl-sn-glycero-3-phosphate + CoA. The enzyme catalyses nonadecanoyl-CoA + 1-(9Z-octadecenoyl)-sn-glycero-3-phosphate = 1-(9Z)-octadecenoyl-2-nonadecanoyl-sn-glycero-3-phosphate + CoA. It carries out the reaction 1-hexadecanoyl-sn-glycero-3-phosphocholine + (9Z)-octadecenoyl-CoA = 1-hexadecanoyl-2-(9Z-octadecenoyl)-sn-glycero-3-phosphocholine + CoA. The catalysed reaction is 1-O-hexadecyl-sn-glycero-3-phosphocholine + acetyl-CoA = 1-O-hexadecyl-2-acetyl-sn-glycero-3-phosphocholine + CoA. It catalyses the reaction 1-O-octadecyl-sn-glycero-3-phosphocholine + acetyl-CoA = 1-O-octadecyl-2-acetyl-sn-glycero-3-phosphocholine + CoA. The enzyme catalyses 1-hexadecanoyl-sn-glycero-3-phosphocholine + acetyl-CoA = 1-hexadecanoyl-2-acetyl-sn-glycero-3-phosphocholine + CoA. It carries out the reaction 1-octadecanoyl-sn-glycero-3-phosphocholine + acetyl-CoA = 1-octadecanoyl-2-acetyl-sn-glycero-3-phosphocholine + CoA. The catalysed reaction is a 1-O-(1Z-alkenyl)-sn-glycero-3-phosphocholine + acetyl-CoA = 1-O-(1Z)-alkenyl-2-acetyl-sn-glycero-3-phosphocholine + CoA. It catalyses the reaction 1-O-octadecyl-sn-glycero-3-phosphocholine + (5Z,8Z,11Z,14Z)-eicosatetraenoyl-CoA = 1-O-octadecyl-2-(5Z,8Z,11Z,14Z)-eicosatetraenoyl-sn-glycero-3-phosphocholine + CoA. Its pathway is lipid metabolism; phospholipid metabolism. Functionally, exhibits both acyltransferase and acetyltransferase activities. Catalyzes the conversion of lysophosphatidylcholine (1-acyl-sn-glycero-3-phosphocholine or LPC) into phosphatidylcholine (1,2-diacyl-sn-glycero-3-phosphocholine or PC). Catalyzes the conversion 1-acyl-sn-glycerol-3-phosphate (lysophosphatidic acid or LPA) into 1,2-diacyl-sn-glycerol-3-phosphate (phosphatidic acid or PA) by incorporating an acyl moiety at the sn-2 position of the glycerol backbone. Involved in platelet-activating factor (PAF) biosynthesis by catalyzing the conversion of the PAF precursor, 1-O-alkyl-sn-glycero-3-phosphocholine (lyso-PAF) into 1-O-alkyl-2-acetyl-sn-glycero-3-phosphocholine (PAF). Also converts lyso-PAF to 1-O-alkyl-2-acyl-sn-glycero-3-phosphocholine (PC), a major component of cell membranes and a PAF precursor. Under resting conditions, acyltransferase activity is preferred. Upon acute inflammatory stimulus, acetyltransferase activity is enhanced and PAF synthesis increases. Involved in the regulation of lipid droplet number and size. This is Lysophosphatidylcholine acyltransferase 2 (LPCAT2) from Homo sapiens (Human).